Here is a 374-residue protein sequence, read N- to C-terminus: (R)-phenyllactyl-CoA dehydratase beta subunit (374 aa).

Belongs to the FldB/FldC dehydratase alpha/beta subunit family. Part of the heterotrimeric phenyllactate dehydratase complex FldABC, composed of (R)-phenyllactate CoA-transferase (FldA) and a heterodimeric (R)-phenyllactyl-CoA dehydratase (FldB and FldC). [4Fe-4S] cluster serves as cofactor. The cofactor is No flavin could be detected in the FldABC complex, and the addition of FAD, FMN or riboflavin to the dehydratase do not increase enzymatic activity..

It carries out the reaction (R)-3-phenyllactoyl-CoA = (E)-cinnamoyl-CoA + H2O. The catalysed reaction is (R)-3-(4-hydroxyphenyl)lactoyl-CoA = (E)-4-coumaroyl-CoA + H2O. It catalyses the reaction (R)-3-(indol-3-yl)lactoyl-CoA = (E)-3-(indol-3-yl)acryloyl-CoA + H2O. Its pathway is amino-acid degradation; L-phenylalanine degradation. Functionally, component of the phenyllactate dehydratase complex FldABC that is involved in the fermentation of L-phenylalanine via a Stickland reaction. This complex catalyzes the reversible syn-dehydration of (R)-phenyllactate to (E)-cinnamate in two steps, a CoA-transfer from cinnamoyl-CoA to phenyllactate, catalyzed by FldA, followed by the dehydration of phenyllactyl-CoA to cinnamoyl-CoA, catalyzed by FldB and FldC. Requires the activator FldI to initiate catalysis. The chain is (R)-phenyllactyl-CoA dehydratase beta subunit from Clostridium sporogenes.